The chain runs to 229 residues: DNA repair protein RecO (229 aa).

This sequence belongs to the RecO family.

Functionally, involved in DNA repair and RecF pathway recombination. The protein is DNA repair protein RecO of Legionella pneumophila (strain Paris).